Reading from the N-terminus, the 390-residue chain is Phosphopentomutase (390 aa).

6 residues coordinate Mn(2+): Asp-12, Asp-285, His-290, Asp-326, His-327, and His-338.

The protein belongs to the phosphopentomutase family. It depends on Mn(2+) as a cofactor.

It localises to the cytoplasm. The enzyme catalyses 2-deoxy-alpha-D-ribose 1-phosphate = 2-deoxy-D-ribose 5-phosphate. It catalyses the reaction alpha-D-ribose 1-phosphate = D-ribose 5-phosphate. It functions in the pathway carbohydrate degradation; 2-deoxy-D-ribose 1-phosphate degradation; D-glyceraldehyde 3-phosphate and acetaldehyde from 2-deoxy-alpha-D-ribose 1-phosphate: step 1/2. Functionally, isomerase that catalyzes the conversion of deoxy-ribose 1-phosphate (dRib-1-P) and ribose 1-phosphate (Rib-1-P) to deoxy-ribose 5-phosphate (dRib-5-P) and ribose 5-phosphate (Rib-5-P), respectively. The chain is Phosphopentomutase from Brevibacillus brevis (strain 47 / JCM 6285 / NBRC 100599).